The primary structure comprises 101 residues: Small ribosomal subunit protein bS6 (101 aa).

This sequence belongs to the bacterial ribosomal protein bS6 family.

In terms of biological role, binds together with bS18 to 16S ribosomal RNA. The protein is Small ribosomal subunit protein bS6 of Arthrobacter sp. (strain FB24).